The sequence spans 327 residues: Transaldolase (327 aa).

K132 acts as the Schiff-base intermediate with substrate in catalysis.

This sequence belongs to the transaldolase family. Type 1 subfamily.

It is found in the cytoplasm. It catalyses the reaction D-sedoheptulose 7-phosphate + D-glyceraldehyde 3-phosphate = D-erythrose 4-phosphate + beta-D-fructose 6-phosphate. It participates in carbohydrate degradation; pentose phosphate pathway; D-glyceraldehyde 3-phosphate and beta-D-fructose 6-phosphate from D-ribose 5-phosphate and D-xylulose 5-phosphate (non-oxidative stage): step 2/3. Functionally, transaldolase is important for the balance of metabolites in the pentose-phosphate pathway. The sequence is that of Transaldolase from Chlamydia trachomatis serovar D (strain ATCC VR-885 / DSM 19411 / UW-3/Cx).